Reading from the N-terminus, the 113-residue chain is UPF0102 protein Mfla_2283 (113 aa).

The protein belongs to the UPF0102 family.

The chain is UPF0102 protein Mfla_2283 from Methylobacillus flagellatus (strain ATCC 51484 / DSM 6875 / VKM B-1610 / KT).